A 168-amino-acid polypeptide reads, in one-letter code: MALLPILEFPDARLRTVAKPVEQVDERVRAIIDDMFETMYDAPGIGLAATQVNVHEQIIVIDISENHDEPLVFINPRIDVLDETLFDYEEGCLSVPGFYEEVTRPRHVRVTALNRDGEEFVLEPEGLLAVCIQHEIDHLKGKLFVDYVSNIKRQRIRKKLEKQHKERA.

Positions 92 and 134 each coordinate Fe cation. Glu-135 is an active-site residue. A Fe cation-binding site is contributed by His-138.

It belongs to the polypeptide deformylase family. It depends on Fe(2+) as a cofactor.

The catalysed reaction is N-terminal N-formyl-L-methionyl-[peptide] + H2O = N-terminal L-methionyl-[peptide] + formate. In terms of biological role, removes the formyl group from the N-terminal Met of newly synthesized proteins. Requires at least a dipeptide for an efficient rate of reaction. N-terminal L-methionine is a prerequisite for activity but the enzyme has broad specificity at other positions. This chain is Peptide deformylase, found in Teredinibacter turnerae (strain ATCC 39867 / T7901).